The chain runs to 478 residues: PRAME family member 11 (478 aa).

The LRR 1; degenerate repeat unit spans residues 99-126; it reads RWKLQVLDLQDVCENFWMVWSEAMAHGC. An LRR 2; degenerate repeat occupies 181 to 205; it reads HLCCKKLKILGMPFRNIRSILKMVN. One copy of the LRR 3; degenerate repeat lies at 206-232; the sequence is LDCIQEVEVNCKWILPILTQFTPYLGH. The stretch at 233 to 268 is one LRR 4; degenerate repeat; the sequence is LRNLQKLVLSHMDVSRYVSPEQKKEIVTQFTTQFLK. LRR repeat units follow at residues 269 to 294, 295 to 326, 327 to 347, 351 to 378, and 379 to 403; these read LRCLQKLYMNSVSFLEGHLDQLLSCL, KTSLKVLTITNCVLLESDLKHLSQCPSISQLK, TLDLSGIRLTNYSLVPLQILL, AATLEYLDLDDCGIIDSQVNAILPALSR, and CFELNTFSFCGNPICMATLENLLSH.

Belongs to the PRAME family.

This chain is PRAME family member 11, found in Homo sapiens (Human).